The following is a 214-amino-acid chain: Cell division protein SepF (214 aa).

The tract at residues 23-70 (YYDDRAPSRGFPRPRFDDGYGRYDGDDYDDPRREPADCPPPAGYRGGY) is disordered. Residues 36-58 (PRFDDGYGRYDGDDYDDPRREPA) show a composition bias toward basic and acidic residues.

Belongs to the SepF family. Homodimer. Interacts with FtsZ.

Its subcellular location is the cytoplasm. Functionally, cell division protein that is part of the divisome complex and is recruited early to the Z-ring. Probably stimulates Z-ring formation, perhaps through the cross-linking of FtsZ protofilaments. Its function overlaps with FtsA. This chain is Cell division protein SepF, found in Mycolicibacterium paratuberculosis (strain ATCC BAA-968 / K-10) (Mycobacterium paratuberculosis).